The sequence spans 554 residues: Esterase cest-33 (554 aa).

G2 carries the N-myristoyl glycine lipid modification. The cysteines at positions 76 and 98 are disulfide-linked. Catalysis depends on S208, which acts as the Acyl-ester intermediate. Active-site charge relay system residues include E331 and H446.

The protein belongs to the type-B carboxylesterase/lipase family.

It is found in the cytoplasm. Its subcellular location is the cell membrane. It catalyses the reaction a carboxylic ester + H2O = an alcohol + a carboxylate + H(+). The protein is Esterase cest-33 of Caenorhabditis elegans.